Reading from the N-terminus, the 334-residue chain is Malate dehydrogenase, cytoplasmic (334 aa).

At Ser-2 the chain carries N-acetylserine. NAD(+)-binding positions include 11 to 17 (GAAGQIA) and Asp-42. Positions 92 and 98 each coordinate substrate. Asn-105 serves as a coordination point for NAD(+). Position 110 is an N6-succinyllysine (Lys-110). NAD(+) is bound at residue Gln-112. An N6-acetyllysine mark is found at Lys-118 and Lys-121. Residue 129–131 (VGN) coordinates NAD(+). The substrate site is built by Asn-131 and Arg-162. Residue His-187 is the Proton acceptor of the active site. Lys-214 carries the post-translational modification N6-succinyllysine. Ser-217 carries the phosphoserine modification. Arg-230 bears the Omega-N-methylarginine mark. Ser-241 is modified (phosphoserine). Lys-298 is subject to N6-acetyllysine; alternate. Lys-298 is subject to N6-succinyllysine; alternate. Ser-309 carries the phosphoserine modification. N6-succinyllysine is present on Lys-318. Phosphoserine is present on residues Ser-332 and Ser-333.

It belongs to the LDH/MDH superfamily. MDH type 2 family. In terms of assembly, homodimer. ISGylated. In terms of processing, acetylation at Lys-118 dramatically enhances enzymatic activity and promotes adipogenic differentiation.

The protein localises to the cytoplasm. The protein resides in the cytosol. The catalysed reaction is (S)-malate + NAD(+) = oxaloacetate + NADH + H(+). It catalyses the reaction (2R)-2-hydroxy-3-(4-hydroxyphenyl)propanoate + NAD(+) = 3-(4-hydroxyphenyl)pyruvate + NADH + H(+). It carries out the reaction (S)-2-hydroxyglutarate + NAD(+) = 2-oxoglutarate + NADH + H(+). Functionally, catalyzes the reduction of aromatic alpha-keto acids in the presence of NADH. Plays essential roles in the malate-aspartate shuttle and the tricarboxylic acid cycle, important in mitochondrial NADH supply for oxidative phosphorylation. Catalyzes the reduction of 2-oxoglutarate to 2-hydroxyglutarate, leading to elevated reactive oxygen species (ROS). This Rattus norvegicus (Rat) protein is Malate dehydrogenase, cytoplasmic (Mdh1).